We begin with the raw amino-acid sequence, 531 residues long: Peptide chain release factor 3 (531 aa).

The 270-residue stretch at 11 to 280 folds into the tr-type G domain; sequence GRRRTFAIIS…AFIRFASRPG (270 aa). GTP contacts are provided by residues 20-27, 88-92, and 142-145; these read SHPDAGKT, DTPGH, and NKLD.

The protein belongs to the TRAFAC class translation factor GTPase superfamily. Classic translation factor GTPase family. PrfC subfamily.

It localises to the cytoplasm. Functionally, increases the formation of ribosomal termination complexes and stimulates activities of RF-1 and RF-2. It binds guanine nucleotides and has strong preference for UGA stop codons. It may interact directly with the ribosome. The stimulation of RF-1 and RF-2 is significantly reduced by GTP and GDP, but not by GMP. This Gloeobacter violaceus (strain ATCC 29082 / PCC 7421) protein is Peptide chain release factor 3.